The primary structure comprises 231 residues: Endonuclease NucS (231 aa).

Belongs to the NucS endonuclease family.

The protein localises to the cytoplasm. Its function is as follows. Cleaves both 3' and 5' ssDNA extremities of branched DNA structures. In Micrococcus luteus (strain ATCC 4698 / DSM 20030 / JCM 1464 / CCM 169 / CCUG 5858 / IAM 1056 / NBRC 3333 / NCIMB 9278 / NCTC 2665 / VKM Ac-2230) (Micrococcus lysodeikticus), this protein is Endonuclease NucS.